A 131-amino-acid polypeptide reads, in one-letter code: Small ribosomal subunit protein uS8 (131 aa).

This sequence belongs to the universal ribosomal protein uS8 family. As to quaternary structure, part of the 30S ribosomal subunit. Contacts proteins S5 and S12.

One of the primary rRNA binding proteins, it binds directly to 16S rRNA central domain where it helps coordinate assembly of the platform of the 30S subunit. The sequence is that of Small ribosomal subunit protein uS8 from Polaromonas naphthalenivorans (strain CJ2).